A 465-amino-acid polypeptide reads, in one-letter code: Cysteine--tRNA ligase (465 aa).

C29 provides a ligand contact to Zn(2+). The 'HIGH' region signature appears at 31–41; the sequence is PTVYNYIHIGN. Positions 209, 234, and 238 each coordinate Zn(2+). Residues 266–270 carry the 'KMSKS' region motif; it reads KMSKS. K269 serves as a coordination point for ATP. Residue S270 is modified to Phosphoserine.

It belongs to the class-I aminoacyl-tRNA synthetase family. In terms of assembly, monomer. The cofactor is Zn(2+).

It localises to the cytoplasm. It carries out the reaction tRNA(Cys) + L-cysteine + ATP = L-cysteinyl-tRNA(Cys) + AMP + diphosphate. This Bacillus cereus (strain AH187) protein is Cysteine--tRNA ligase.